The primary structure comprises 209 residues: 3-demethoxyubiquinol 3-hydroxylase (209 aa).

Fe cation is bound by residues Glu-58, Glu-88, His-91, Glu-140, Glu-172, and His-175.

Belongs to the COQ7 family. Requires Fe cation as cofactor.

It is found in the cell membrane. It carries out the reaction a 5-methoxy-2-methyl-3-(all-trans-polyprenyl)benzene-1,4-diol + AH2 + O2 = a 3-demethylubiquinol + A + H2O. It participates in cofactor biosynthesis; ubiquinone biosynthesis. Catalyzes the hydroxylation of 2-nonaprenyl-3-methyl-6-methoxy-1,4-benzoquinol during ubiquinone biosynthesis. This is 3-demethoxyubiquinol 3-hydroxylase from Polaromonas naphthalenivorans (strain CJ2).